The primary structure comprises 145 residues: AP-2 complex subunit sigma (145 aa).

The protein belongs to the adaptor complexes small subunit family. In terms of assembly, adaptor protein complex 2 (AP-2) is a heterotetramer composed of two large adaptins (alpha-type subunit apl3 and beta-type subunit apl1), a medium chain (mu-type subunit apm4) and a small adaptin (sigma-type subunit aps2).

The protein resides in the cell membrane. It is found in the membrane. Its subcellular location is the coated pit. Functionally, component of the adaptor complexes which link clathrin to receptors in coated vesicles. Clathrin-associated protein complexes are believed to interact with the cytoplasmic tails of membrane proteins, leading to their selection and concentration. The protein is AP-2 complex subunit sigma (aps2) of Aspergillus fumigatus (strain ATCC MYA-4609 / CBS 101355 / FGSC A1100 / Af293) (Neosartorya fumigata).